A 481-amino-acid polypeptide reads, in one-letter code: Tryptophan--tRNA ligase, cytoplasmic (481 aa).

In terms of domain architecture, WHEP-TRS spans Ser12–Pro68. Position 158 is an N6-succinyllysine (Lys158). Positions Pro168–His177 match the 'HIGH' region motif. Residues Lys353 to Ser357 carry the 'KMSKS' region motif. Position 355 is a phosphoserine (Ser355).

The protein belongs to the class-I aminoacyl-tRNA synthetase family. In terms of assembly, homodimer. Interacts with oxidized form of GAPDH. Proteolytic cleavage generates 2 forms; T1-TrpRS and T2-TrpRS. Isoform 2 is widely expressed, isoform 1 is found only in embryonic stem cells.

It is found in the cytoplasm. The enzyme catalyses tRNA(Trp) + L-tryptophan + ATP = L-tryptophyl-tRNA(Trp) + AMP + diphosphate + H(+). Catalyzes the attachment of tryptophan to tRNA(Trp) in a two-step reaction: tryptophan is first activated by ATP to form Trp-AMP and then transferred to the acceptor end of the tRNA(Trp). Could also possess an angiostatic activity. The protein is Tryptophan--tRNA ligase, cytoplasmic of Mus musculus (Mouse).